Consider the following 478-residue polypeptide: Shikimate biosynthesis protein AroDE (478 aa).

The interval 1-208 is 3-dehydroquinate dehydratase; it reads MLCTIIRGPS…LNHHYFYNFT (208 aa). 3-dehydroquinate is bound by residues S21, 29–31, and 55–57; these read EMR and TWK. The active-site Proton donor/acceptor; for 3-dehydroquinate dehydratase activity is the H110. Catalysis depends on K133, which acts as the Schiff-base intermediate with substrate; for 3-dehydroquinate dehydratase activity. The 3-dehydroquinate site is built by R171 and Q196. Residues 209–478 are shikimate 5-dehydrogenase; that stretch reads NLSPQSQICA…VLASLFSIAA (270 aa). 226–228 contributes to the shikimate binding site; that stretch reads SIG. K277 functions as the Proton acceptor; for shikimate dehydrogenase activity in the catalytic mechanism. 2 residues coordinate shikimate: N298 and D313. NADP(+)-binding positions include 337–341, 360–362, and G435; these read GAGGA and NRT. Q442 serves as a coordination point for shikimate.

It in the N-terminal section; belongs to the type-I 3-dehydroquinase family. In the C-terminal section; belongs to the shikimate dehydrogenase family.

It catalyses the reaction 3-dehydroquinate = 3-dehydroshikimate + H2O. The catalysed reaction is shikimate + NADP(+) = 3-dehydroshikimate + NADPH + H(+). It participates in metabolic intermediate biosynthesis; chorismate biosynthesis; chorismate from D-erythrose 4-phosphate and phosphoenolpyruvate: step 3/7. It functions in the pathway metabolic intermediate biosynthesis; chorismate biosynthesis; chorismate from D-erythrose 4-phosphate and phosphoenolpyruvate: step 4/7. In terms of biological role, bifunctional enzyme that catalyzes two sequential steps of the aromatic amino acids biosynthetic pathway. In the first reaction, the AroD domain catalyzes the cis-dehydration of 3-dehydroquinate (DHQ) and introduces the first double bond of the aromatic ring to yield 3-dehydroshikimate; in the second reaction, the AroE domain catalyzes the reversible NADPH linked reduction of 3-dehydroshikimate (DHSA) to yield shikimate (SA). The chain is Shikimate biosynthesis protein AroDE from Chlamydia muridarum (strain MoPn / Nigg).